The chain runs to 243 residues: CTD nuclear envelope phosphatase 1 homolog (243 aa).

The chain crosses the membrane as a helical span at residues 11 to 27 (ALLLLLSKVWTCICFMF). An FCP1 homology domain is found at 56-223 (SLVQRKTLVL…LSLLPMLDAL (168 aa)).

The protein belongs to the dullard family.

Its subcellular location is the membrane. The catalysed reaction is O-phospho-L-seryl-[protein] + H2O = L-seryl-[protein] + phosphate. It carries out the reaction O-phospho-L-threonyl-[protein] + H2O = L-threonyl-[protein] + phosphate. Functionally, serine/threonine protein phosphatase that may dephosphorylate and activate lipin-like phosphatases. Lipins are phosphatidate phosphatases that catalyze the conversion of phosphatidic acid to diacylglycerol and control the metabolism of fatty acids at different levels. May indirectly modulate the lipid composition of nuclear and/or endoplasmic reticulum membranes and be required for proper nuclear membrane morphology and/or dynamics. May also indirectly regulate the production of lipid droplets and triacylglycerol. The polypeptide is CTD nuclear envelope phosphatase 1 homolog (l(1)G0269) (Drosophila pseudoobscura pseudoobscura (Fruit fly)).